Consider the following 288-residue polypeptide: Stomatin (288 aa).

The interval 1–22 (MAEKRHTRDSEAQRLPDSFKDS) is disordered. The Cytoplasmic segment spans residues 1–25 (MAEKRHTRDSEAQRLPDSFKDSPSK). Serine 10 carries the post-translational modification Phosphoserine; by PKA. Residue serine 18 is modified to Phosphoserine. The stretch at 26–54 (GLGPCGWILVAFSFLFTVITFPISIWMCI) is an intramembrane region. Cysteine 30 carries the S-palmitoyl cysteine lipid modification. Over 55-288 (KIIKEYERAI…IIGAKHSHLG (234 aa)) the chain is Cytoplasmic. Cysteine 87 carries the S-palmitoyl cysteine; partial lipid modification. Serine 161 and serine 244 each carry phosphoserine. The interval 265-273 (STIVFPLPI) is required for homooligomerization. A required for lipid raft association region spans residues 267-269 (IVF). Residues 273–287 (IDMLQGIIGAKHSHL) form an interaction with LANCL1 region.

This sequence belongs to the band 7/mec-2 family. Homodimer and higher order homooligomer. The homodimer is banana-shaped. Interacts with ASIC1, ASIC2 and ASIC3. Interacts with LANCL1. Interacts with SLC2A1. Interacts with SLC4A1; this interaction positively regulates SLC4A1 activity. Identified in large complexes with SLC40A1, SLC14A1, SLC29A1 and AQP1. Interacts with STOML1; may redistribute STOM from the plasma membrane to late endosomes. As to expression, detected in erythrocytes (at protein level). Widely expressed.

It is found in the cell membrane. The protein resides in the cytoplasm. It localises to the cytoskeleton. The protein localises to the membrane raft. Its subcellular location is the melanosome. It is found in the cytoplasmic vesicle. In terms of biological role, regulates ion channel activity and transmembrane ion transport. Regulates ASIC2 and ASIC3 channel activity. This is Stomatin from Homo sapiens (Human).